The sequence spans 125 residues: Small ribosomal subunit protein uS12 (125 aa).

The interval 1–31 (MPTINQLVRQGREVETTKSKSPAMQNSPQRR) is disordered. The span at 19 to 29 (SKSPAMQNSPQ) shows a compositional bias: polar residues. Aspartate 89 bears the 3-methylthioaspartic acid mark.

This sequence belongs to the universal ribosomal protein uS12 family. As to quaternary structure, part of the 30S ribosomal subunit. Contacts proteins S8 and S17. May interact with IF1 in the 30S initiation complex.

With S4 and S5 plays an important role in translational accuracy. Its function is as follows. Interacts with and stabilizes bases of the 16S rRNA that are involved in tRNA selection in the A site and with the mRNA backbone. Located at the interface of the 30S and 50S subunits, it traverses the body of the 30S subunit contacting proteins on the other side and probably holding the rRNA structure together. The combined cluster of proteins S8, S12 and S17 appears to hold together the shoulder and platform of the 30S subunit. The chain is Small ribosomal subunit protein uS12 from Paracidovorax citrulli (strain AAC00-1) (Acidovorax citrulli).